Consider the following 210-residue polypeptide: Peroxynitrite isomerase (210 aa).

The GXWXGXG motif lies at 21-27 (GQWEGQG). Histidine 190 is a binding site for heme b.

It belongs to the nitrobindin family. Homodimer. Requires heme b as cofactor.

The enzyme catalyses peroxynitrite = nitrate. The protein operates within nitrogen metabolism. Heme-binding protein able to scavenge peroxynitrite and to protect free L-tyrosine against peroxynitrite-mediated nitration, by acting as a peroxynitrite isomerase that converts peroxynitrite to nitrate. Therefore, this protein likely plays a role in peroxynitrite sensing and in the detoxification of reactive nitrogen and oxygen species (RNS and ROS, respectively). Is able to bind nitric oxide (NO) in vitro, but may act as a sensor of peroxynitrite levels in vivo. The chain is Peroxynitrite isomerase from Renibacterium salmoninarum (strain ATCC 33209 / DSM 20767 / JCM 11484 / NBRC 15589 / NCIMB 2235).